The sequence spans 206 residues: ATP-dependent Clp protease proteolytic subunit (206 aa).

S108 (nucleophile) is an active-site residue. H133 is a catalytic residue.

Belongs to the peptidase S14 family. In terms of assembly, fourteen ClpP subunits assemble into 2 heptameric rings which stack back to back to give a disk-like structure with a central cavity, resembling the structure of eukaryotic proteasomes.

It is found in the cytoplasm. The enzyme catalyses Hydrolysis of proteins to small peptides in the presence of ATP and magnesium. alpha-casein is the usual test substrate. In the absence of ATP, only oligopeptides shorter than five residues are hydrolyzed (such as succinyl-Leu-Tyr-|-NHMec, and Leu-Tyr-Leu-|-Tyr-Trp, in which cleavage of the -Tyr-|-Leu- and -Tyr-|-Trp bonds also occurs).. In terms of biological role, cleaves peptides in various proteins in a process that requires ATP hydrolysis. Has a chymotrypsin-like activity. Plays a major role in the degradation of misfolded proteins. This is ATP-dependent Clp protease proteolytic subunit from Chromohalobacter salexigens (strain ATCC BAA-138 / DSM 3043 / CIP 106854 / NCIMB 13768 / 1H11).